Consider the following 776-residue polypeptide: Cilium assembly protein DZIP1L (776 aa).

The C2H2-type zinc finger occupies 166-189; sequence HTCHLCDKTFMNATFLRGHIQRRH. Residues 196–450 adopt a coiled-coil conformation; it reads GKQKQEQQLG…RKVLAALRNN (255 aa). Ser-425 and Ser-426 each carry phosphoserine. The tract at residues 520–776 is disordered; it reads SRAKKRWEGT…SGSRPRIPGW (257 aa). Positions 600 to 618 are enriched in low complexity; it reads GPSSTPVSPGPGLSTPPFS. Over residues 652–683 the composition is skewed to polar residues; that stretch reads WSDSETSEESAQSPGKGSDGLASSATLVQSMV. A compositionally biased stretch (basic and acidic residues) spans 685-694; the sequence is NLEKQLETPA. Over residues 709-721 the composition is skewed to polar residues; that stretch reads TALQRSSTPARKT.

Belongs to the DZIP C2H2-type zinc-finger protein family. Interacts with SEPTIN2.

It is found in the cytoplasm. The protein resides in the cytoskeleton. It localises to the cilium basal body. Its subcellular location is the microtubule organizing center. The protein localises to the centrosome. It is found in the centriole. Its function is as follows. Involved in primary cilium formation. Probably acts as a transition zone protein required for localization of PKD1/PC1 and PKD2/PC2 to the ciliary membrane. The chain is Cilium assembly protein DZIP1L from Rattus norvegicus (Rat).